Consider the following 358-residue polypeptide: Fructose-bisphosphate aldolase 1, cytoplasmic (358 aa).

A substrate-binding site is contributed by R39. The active-site Proton acceptor is E183. The active-site Schiff-base intermediate with dihydroxyacetone-P is the K225. Residues 266–268 and R298 contribute to the substrate site; that span reads SGG.

The protein belongs to the class I fructose-bisphosphate aldolase family. In terms of assembly, homotetramer. In terms of tissue distribution, expressed in callus.

The protein resides in the cytoplasm. It localises to the cytosol. It catalyses the reaction beta-D-fructose 1,6-bisphosphate = D-glyceraldehyde 3-phosphate + dihydroxyacetone phosphate. Its pathway is carbohydrate degradation; glycolysis; D-glyceraldehyde 3-phosphate and glycerone phosphate from D-glucose: step 4/4. Fructose-bisphosphate aldolase that plays a key role in glycolysis and gluconeogenesis. Involved in gibberellin-mediated root growth. May be regulated by CDPK13. Associates with vacuolar proton ATPase (V-ATPase) and may regulate the V-ATPase-mediated control of root cell elongation. The chain is Fructose-bisphosphate aldolase 1, cytoplasmic from Oryza sativa subsp. japonica (Rice).